The primary structure comprises 647 residues: DEAD-box ATP-dependent RNA helicase 18 (647 aa).

A Q motif motif is present at residues 23–51; the sequence is FSELSPALSPEVVKALKGGGFRRCTPVQA. Residues 54–232 form the Helicase ATP-binding domain; it reads IPLLLSHKDV…KAGLRNPVRV (179 aa). An ATP-binding site is contributed by 67-74; it reads AATGSGKT. Residues 180–183 carry the DEAD box motif; that stretch reads DEAD. Residues 274–430 form the Helicase C-terminal domain; it reads QLVDFLVQNN…DIVPQIRSAA (157 aa). Residues 507–582 are a coiled coil; sequence KYKDKAREKQ…RLLKKLKRGV (76 aa). Basic and acidic residues predominate over residues 512–545; that stretch reads AREKQRQKTLKRKAEELALRPEIEKRRKAPEKPE. 2 disordered regions span residues 512 to 565 and 590 to 647; these read AREK…KEDM and KLTG…TRRR. Residues 596–610 are compositionally biased toward acidic residues; the sequence is ESDDDDSSDGGDSDL. Residues 619–633 are compositionally biased toward basic residues; it reads KVLKKIKQKGKAKGS.

The protein belongs to the DEAD box helicase family. DDX55/SPB4 subfamily. In terms of assembly, interacts with BRI1. Post-translationally, phosphorylated.

It carries out the reaction ATP + H2O = ADP + phosphate + H(+). This is DEAD-box ATP-dependent RNA helicase 18 from Oryza sativa subsp. japonica (Rice).